We begin with the raw amino-acid sequence, 515 residues long: Tabersonine 6,7-epoxidase isoform 2 (515 aa).

Residues 1 to 21 form a helical membrane-spanning segment; it reads MEFVVSPFAFLIFFFILLKMI. N-linked (GlcNAc...) asparagine glycosylation is found at asparagine 173, asparagine 259, and asparagine 352. A heme-binding site is contributed by cysteine 449.

Belongs to the cytochrome P450 family. Heme serves as cofactor. In terms of tissue distribution, mainly expressed in aerial organs, including stems, leaves and flowers.

Its subcellular location is the endoplasmic reticulum membrane. It carries out the reaction (-)-tabersonine + reduced [NADPH--hemoprotein reductase] + O2 = lochnericine + oxidized [NADPH--hemoprotein reductase] + H2O + H(+). It participates in alkaloid biosynthesis. Functionally, component of the monoterpenoid indole alkaloids (MIAs, e.g. echitovenine, tabersonine, lochnericine, 19-hydroxytabersonine and horhammericine) biosynthetic pathway; MIAs are used in cancer treatment and other medical applications. Cytochrome P450 catalyzing the conversion of tabersonine to lochnericine. The polypeptide is Tabersonine 6,7-epoxidase isoform 2 (Catharanthus roseus (Madagascar periwinkle)).